A 303-amino-acid polypeptide reads, in one-letter code: Archaeosortase A (303 aa).

The next 7 helical transmembrane spans lie at 3–23 (GLLS…GAVA), 36–56 (TAAW…FTLV), 60–80 (YIEG…GWLL), 93–113 (AVAA…FTLL), 169–189 (VVLA…IAAV), 200–220 (LAIA…FIAI), and 259–279 (LAVV…PELL). Cysteine 173 acts as the Acyl-thioester intermediate in catalysis. The active-site Proton donor is the arginine 214.

It belongs to the exosortase/archaeosortase family. Archaeosortase A subfamily.

It is found in the cell membrane. In terms of biological role, transpeptidase that recognizes and modifies its substrate by proteolytic cleavage of a sorting signal. Following cleavage, a covalent intermediate is formed via a thioester bond between the archaeosortase and its substrate, which is then transferred and covalently attached to the cell membrane. This sortase recognizes a tripartite structure consisting of a conserved Pro-Gly-Phe (PGF) motif, followed by a transmembrane alpha helix domain and a cluster of basic residues, usually at the C-terminus of target proteins. Confirmed substrates include the cell surface S-layer glycoprotein Csg and HVO_0405. ArtA is required for the C-terminal processing of Csg and for its lipidation and attachment to the archaeal plasma membrane. It is also required for the processing of HVO_0405, which contains an atypical central tripartite structure. This is Archaeosortase A from Haloferax volcanii (strain ATCC 29605 / DSM 3757 / JCM 8879 / NBRC 14742 / NCIMB 2012 / VKM B-1768 / DS2) (Halobacterium volcanii).